The sequence spans 397 residues: Multidrug efflux pump subunit AcrA (397 aa).

The N-terminal stretch at 1-24 (MNKNRGFTPLAVVLMLSGSLALTG) is a signal peptide. A lipid anchor (N-palmitoyl cysteine) is attached at Cys-25. A lipid anchor (S-diacylglycerol cysteine) is attached at Cys-25. Residues 98 to 172 (PATYQATYDS…AVETARINLA (75 aa)) adopt a coiled-coil conformation. Residues 377-397 (EVTADNNQQAASGAQPEQSKS) form a disordered region. The segment covering 379-397 (TADNNQQAASGAQPEQSKS) has biased composition (polar residues).

It belongs to the membrane fusion protein (MFP) (TC 8.A.1) family. Monomeric in solution. Homotrimeric; interacts independently with AcrB and TolC as well as AcrZ. Part of the AcrA-AcrB-TolC efflux pump.

The protein resides in the cell inner membrane. In terms of biological role, acrA-AcrB-AcrZ-TolC is a drug efflux protein complex with broad substrate specificity that uses the proton motive force to export substrates. This subunit may act as an adapter protein that links AcrB and TolC stably together. The chain is Multidrug efflux pump subunit AcrA (acrA) from Escherichia coli O157:H7.